Reading from the N-terminus, the 258-residue chain is UPF0246 protein YaaA (258 aa).

It belongs to the UPF0246 family.

The polypeptide is UPF0246 protein YaaA (Escherichia coli O6:K15:H31 (strain 536 / UPEC)).